The chain runs to 257 residues: Beta-fibrinogenase mucrofibrase-1 (257 aa).

Residues M1–A18 form the signal peptide. Residues Q19–L24 constitute a propeptide that is removed on maturation. Residues V25–A248 enclose the Peptidase S1 domain. Intrachain disulfides connect C31–C162, C49–C65, C97–C255, C141–C209, C173–C188, and C199–C224. Catalysis depends on charge relay system residues H64 and D109. The Charge relay system role is filled by S203.

Belongs to the peptidase S1 family. Snake venom subfamily. In terms of assembly, monomer. Expressed by the venom gland.

The protein localises to the secreted. Snake venom serine protease with strong beta-fibrinogenolytic activities, angiotensin I (AGT)-degrading activities and strong kallikrein-like activities in vitro, releasing bradykinin from kininogen (KNG1). Intravenous injection strongly lowers blood pressure in experimental rats, which may be explained by the action on angiotensin I and kininogen. In Protobothrops mucrosquamatus (Taiwan habu), this protein is Beta-fibrinogenase mucrofibrase-1.